We begin with the raw amino-acid sequence, 339 residues long: MGNTVTCCVSPDSSPKEGRDREVTESGEPYQAQGEPQDGDVQHMSVWELPIDLSNERNPSDDAQTSTIFLCKSQTDVREKRKSNHINHISPGQLTKKYSSCSTIFLDDSTVSQPNLRSTIKCVTLAIYYHIKNRDSDRSLDIFDEKLHPITREEVAHDYCKHDPDHKHIYRFVRTLFSAAQLTAECAIVTLVYLERLLTYAEIDICPSNWKQIVLGAILLSSKVWDDQAVWNVDYCQIMKDITVEDMNEMERHFLELLQFNINVTASVYAKYYFDLRSLADDNNLHFLLEPLSNERAQKLEAISRLCEDKYKDLSKAAMRRSISADNLVGIRRSNAIIS.

Over residues 1–13 (MGNTVTCCVSPDS) the composition is skewed to polar residues. The interval 1-42 (MGNTVTCCVSPDSSPKEGRDREVTESGEPYQAQGEPQDGDVQ) is disordered. A compositionally biased stretch (basic and acidic residues) spans 14–24 (SPKEGRDREVT). The region spanning 141–263 (DIFDEKLHPI…FLELLQFNIN (123 aa)) is the Cyclin N-terminal domain.

This sequence belongs to the cyclin family. Cyclin Y subfamily.

This Xenopus laevis (African clawed frog) protein is Cyclin-Y-like protein 1-A (ccnyl1-a).